A 162-amino-acid chain; its full sequence is Phosphopantetheine adenylyltransferase (162 aa).

Residue Thr-9 coordinates substrate. ATP contacts are provided by residues Thr-9–Phe-10 and His-17. Residues Lys-41, Leu-73, and Arg-87 each coordinate substrate. ATP-binding positions include Gly-88 to Arg-90, Glu-98, and Phe-123 to Thr-129.

This sequence belongs to the bacterial CoaD family. In terms of assembly, homohexamer. Requires Mg(2+) as cofactor.

Its subcellular location is the cytoplasm. The enzyme catalyses (R)-4'-phosphopantetheine + ATP + H(+) = 3'-dephospho-CoA + diphosphate. Its pathway is cofactor biosynthesis; coenzyme A biosynthesis; CoA from (R)-pantothenate: step 4/5. Reversibly transfers an adenylyl group from ATP to 4'-phosphopantetheine, yielding dephospho-CoA (dPCoA) and pyrophosphate. The chain is Phosphopantetheine adenylyltransferase from Vibrio atlanticus (strain LGP32) (Vibrio splendidus (strain Mel32)).